The primary structure comprises 345 residues: Tetraacyldisaccharide 4'-kinase (345 aa).

Residue histidine 51–threonine 58 participates in ATP binding.

The protein belongs to the LpxK family.

The enzyme catalyses a lipid A disaccharide + ATP = a lipid IVA + ADP + H(+). It participates in glycolipid biosynthesis; lipid IV(A) biosynthesis; lipid IV(A) from (3R)-3-hydroxytetradecanoyl-[acyl-carrier-protein] and UDP-N-acetyl-alpha-D-glucosamine: step 6/6. In terms of biological role, transfers the gamma-phosphate of ATP to the 4'-position of a tetraacyldisaccharide 1-phosphate intermediate (termed DS-1-P) to form tetraacyldisaccharide 1,4'-bis-phosphate (lipid IVA). The protein is Tetraacyldisaccharide 4'-kinase of Bradyrhizobium sp. (strain BTAi1 / ATCC BAA-1182).